The following is a 200-amino-acid chain: Protein GrpE (200 aa).

The segment covering 1–11 has biased composition (polar residues); sequence MSNQTNKAQDN. The segment at 1 to 29 is disordered; sequence MSNQTNKAQDNQVEEIVEGELLNENGTEA.

This sequence belongs to the GrpE family. Homodimer.

Its subcellular location is the cytoplasm. In terms of biological role, participates actively in the response to hyperosmotic and heat shock by preventing the aggregation of stress-denatured proteins, in association with DnaK and GrpE. It is the nucleotide exchange factor for DnaK and may function as a thermosensor. Unfolded proteins bind initially to DnaJ; upon interaction with the DnaJ-bound protein, DnaK hydrolyzes its bound ATP, resulting in the formation of a stable complex. GrpE releases ADP from DnaK; ATP binding to DnaK triggers the release of the substrate protein, thus completing the reaction cycle. Several rounds of ATP-dependent interactions between DnaJ, DnaK and GrpE are required for fully efficient folding. This is Protein GrpE from Shewanella halifaxensis (strain HAW-EB4).